A 657-amino-acid chain; its full sequence is MLKTLGLRSLCPSLGGRGFRRHPNINKYTLSLVRVRWNHHLSNAEIQARIENIPQENYRNFSIVAHVDHGKSTLSDRLLEITGVIDKNSSNKQVLDKLEVERERGITIKAQTCTMFYHDKRNGEDYLLHLVDTPGHVDFRGEVSRSYASCGGALLLVDASQGVQAQTVANFYLAYSMGLKLIPVVNKIDLNVADVERAKAEIEDNFELPRDEIIGVSAKTGLNVKEMLLPTIVDRIPPPTGNKKKPFRALLVDSWYDSYLGVILLVNIVDGKLKKGEKVLCAHTNKKYEVKELGIMYPDRVPTGSLVVGQVGYVVLGMKDSSDAHVGDTLMHVGKESVTDILPGFEEQKPMVYVGAFPSTGTEFKAMDDDINRLVLNDRSVTLERETSNALGQGWRLGFLGSLHASVFRERLEKEYGSKLIITQPTVPYMVRMTDGTESIITNPDDFPDSATRRMKVEELLEPFVEATITLPQEFLGNVIKLCDANRGQQKEITYLNTRGQVVLKYHLPLAHLVDDFFGKLKAASKGYASLDYEDIGYRESDVVKLELLVNGQSIDALARVLHRTEVEKVGREWVQKFKEYVKSQLFEVVIQARAGTKIVARQTIKARRKDVLARLHASDVSRRKKLLEKQKEGKKQMRSVGRVQINQEAYQAFLKR.

A mitochondrion-targeting transit peptide spans 1–21 (MLKTLGLRSLCPSLGGRGFRR). Residues 56-240 (ENYRNFSIVA…TIVDRIPPPT (185 aa)) enclose the tr-type G domain. Residues 65–72 (AHVDHGKS), 132–136 (DTPGH), and 186–189 (NKID) contribute to the GTP site.

This sequence belongs to the TRAFAC class translation factor GTPase superfamily. Classic translation factor GTPase family. LepA subfamily.

It is found in the mitochondrion inner membrane. It catalyses the reaction GTP + H2O = GDP + phosphate + H(+). Its function is as follows. Promotes mitochondrial protein synthesis. May act as a fidelity factor of the translation reaction, by catalyzing a one-codon backward translocation of tRNAs on improperly translocated ribosomes. Binds to mitochondrial ribosomes in a GTP-dependent manner. In Candida glabrata (strain ATCC 2001 / BCRC 20586 / JCM 3761 / NBRC 0622 / NRRL Y-65 / CBS 138) (Yeast), this protein is Translation factor GUF1, mitochondrial.